The primary structure comprises 233 residues: Ribosomal RNA large subunit methyltransferase E (233 aa).

Residues Gly80, Trp82, Asp108, Asp124, and Asp148 each contribute to the S-adenosyl-L-methionine site. Lys188 serves as the catalytic Proton acceptor.

The protein belongs to the class I-like SAM-binding methyltransferase superfamily. RNA methyltransferase RlmE family.

It is found in the cytoplasm. It catalyses the reaction uridine(2552) in 23S rRNA + S-adenosyl-L-methionine = 2'-O-methyluridine(2552) in 23S rRNA + S-adenosyl-L-homocysteine + H(+). Its function is as follows. Specifically methylates the uridine in position 2552 of 23S rRNA at the 2'-O position of the ribose in the fully assembled 50S ribosomal subunit. In Ruegeria pomeroyi (strain ATCC 700808 / DSM 15171 / DSS-3) (Silicibacter pomeroyi), this protein is Ribosomal RNA large subunit methyltransferase E.